A 94-amino-acid polypeptide reads, in one-letter code: Large ribosomal subunit protein bL25 (94 aa).

It belongs to the bacterial ribosomal protein bL25 family. As to quaternary structure, part of the 50S ribosomal subunit; part of the 5S rRNA/L5/L18/L25 subcomplex. Contacts the 5S rRNA. Binds to the 5S rRNA independently of L5 and L18.

In terms of biological role, this is one of the proteins that binds to the 5S RNA in the ribosome where it forms part of the central protuberance. This is Large ribosomal subunit protein bL25 from Photorhabdus laumondii subsp. laumondii (strain DSM 15139 / CIP 105565 / TT01) (Photorhabdus luminescens subsp. laumondii).